A 173-amino-acid chain; its full sequence is Crossover junction endodeoxyribonuclease RuvC (173 aa).

Residues aspartate 8, glutamate 67, and aspartate 139 contribute to the active site. Aspartate 8, glutamate 67, and aspartate 139 together coordinate Mg(2+).

The protein belongs to the RuvC family. In terms of assembly, homodimer which binds Holliday junction (HJ) DNA. The HJ becomes 2-fold symmetrical on binding to RuvC with unstacked arms; it has a different conformation from HJ DNA in complex with RuvA. In the full resolvosome a probable DNA-RuvA(4)-RuvB(12)-RuvC(2) complex forms which resolves the HJ. Requires Mg(2+) as cofactor.

It is found in the cytoplasm. It catalyses the reaction Endonucleolytic cleavage at a junction such as a reciprocal single-stranded crossover between two homologous DNA duplexes (Holliday junction).. The RuvA-RuvB-RuvC complex processes Holliday junction (HJ) DNA during genetic recombination and DNA repair. Endonuclease that resolves HJ intermediates. Cleaves cruciform DNA by making single-stranded nicks across the HJ at symmetrical positions within the homologous arms, yielding a 5'-phosphate and a 3'-hydroxyl group; requires a central core of homology in the junction. The consensus cleavage sequence is 5'-(A/T)TT(C/G)-3'. Cleavage occurs on the 3'-side of the TT dinucleotide at the point of strand exchange. HJ branch migration catalyzed by RuvA-RuvB allows RuvC to scan DNA until it finds its consensus sequence, where it cleaves and resolves the cruciform DNA. The polypeptide is Crossover junction endodeoxyribonuclease RuvC (Shewanella pealeana (strain ATCC 700345 / ANG-SQ1)).